Here is a 232-residue protein sequence, read N- to C-terminus: Clarin-2 (232 aa).

Residues 10–30 (YGLASLLSFSSFILIIVALVV) form a helical membrane-spanning segment. N-linked (GlcNAc...) asparagine glycosylation is present at Asn48. A run of 3 helical transmembrane segments spans residues 101-121 (ILLL…FAIL), 139-159 (LWNV…VAAV), and 188-208 (SFWI…VVAI).

Belongs to the clarin family.

Its subcellular location is the cell projection. The protein resides in the stereocilium membrane. In terms of biological role, plays a key role to hearing function. Required for normal organization and maintenance of the stereocilia bundle and for mechano-electrical transduction. This Homo sapiens (Human) protein is Clarin-2.